The sequence spans 79 residues: NADH-ubiquinone oxidoreductase chain 5 (79 aa).

2 helical membrane-spanning segments follow: residues 5–27 and 40–57; these read TPIMMTTLISLTLPIFATLTNPY and VMYAFITSLPSTTLFILS.

The protein belongs to the complex I subunit 5 family. In terms of assembly, core subunit of respiratory chain NADH dehydrogenase (Complex I) which is composed of 45 different subunits.

The protein localises to the mitochondrion inner membrane. The enzyme catalyses a ubiquinone + NADH + 5 H(+)(in) = a ubiquinol + NAD(+) + 4 H(+)(out). Functionally, core subunit of the mitochondrial membrane respiratory chain NADH dehydrogenase (Complex I) which catalyzes electron transfer from NADH through the respiratory chain, using ubiquinone as an electron acceptor. Essential for the catalytic activity and assembly of complex I. This Macaca fascicularis (Crab-eating macaque) protein is NADH-ubiquinone oxidoreductase chain 5 (MT-ND5).